A 635-amino-acid polypeptide reads, in one-letter code: Threonine--tRNA ligase (635 aa).

A TGS domain is found at M1–T62. A catalytic region spans residues D244–P535. Residues C335, H386, and H512 each contribute to the Zn(2+) site.

This sequence belongs to the class-II aminoacyl-tRNA synthetase family. In terms of assembly, homodimer. It depends on Zn(2+) as a cofactor.

It localises to the cytoplasm. The enzyme catalyses tRNA(Thr) + L-threonine + ATP = L-threonyl-tRNA(Thr) + AMP + diphosphate + H(+). Catalyzes the attachment of threonine to tRNA(Thr) in a two-step reaction: L-threonine is first activated by ATP to form Thr-AMP and then transferred to the acceptor end of tRNA(Thr). Also edits incorrectly charged L-seryl-tRNA(Thr). In Xylella fastidiosa (strain M12), this protein is Threonine--tRNA ligase.